Here is a 527-residue protein sequence, read N- to C-terminus: Glutamyl-tRNA reductase 1, chloroplastic (527 aa).

A chloroplast-targeting transit peptide spans 1 to 43; it reads MAGATSATAAAGAFAAAKARGPAAACPWLVAAGGRRRSGVVRC. Residues 124–127, serine 184, 189–191, and glutamine 195 contribute to the substrate site; these read TCNR and EGQ. The Nucleophile role is filled by cysteine 125. 266-271 provides a ligand contact to NADP(+); it reads GAGKMG.

This sequence belongs to the glutamyl-tRNA reductase family. Homodimer.

The protein resides in the plastid. Its subcellular location is the chloroplast. It catalyses the reaction (S)-4-amino-5-oxopentanoate + tRNA(Glu) + NADP(+) = L-glutamyl-tRNA(Glu) + NADPH + H(+). It participates in porphyrin-containing compound metabolism; protoporphyrin-IX biosynthesis; 5-aminolevulinate from L-glutamyl-tRNA(Glu): step 1/2. Its function is as follows. Catalyzes the NADPH-dependent reduction of glutamyl-tRNA(Glu) to glutamate 1-semialdehyde (GSA). The chain is Glutamyl-tRNA reductase 1, chloroplastic (HEMA1) from Hordeum vulgare (Barley).